A 994-amino-acid chain; its full sequence is Regulator of telomere elongation helicase 1 homolog (994 aa).

In terms of domain architecture, Helicase ATP-binding spans 7–316; the sequence is AGIPVHFPFE…DDLMLLKEML (310 aa). An ATP-binding site is contributed by 42–49; the sequence is SPTGTGKT. [4Fe-4S] cluster-binding residues include Cys146, Cys164, Cys173, and Cys209. The DEAH box motif lies at 252–255; sequence DEAH. The interval 861-887 is disordered; sequence SSGLVKIHKRERSSPPGSSQSSSQTAK. The span at 874–884 shows a compositional bias: low complexity; the sequence is SPPGSSQSSSQ.

Belongs to the helicase family. RAD3/XPD subfamily.

Its subcellular location is the nucleus. The catalysed reaction is ATP + H2O = ADP + phosphate + H(+). In terms of biological role, a probable ATP-dependent DNA helicase implicated in DNA repair and the maintenance of genomic stability. Acts as an anti-recombinase to counteract toxic recombination and limit crossover during meiosis. Regulates meiotic recombination and crossover homeostasis by physically dissociating strand invasion events and thereby promotes noncrossover repair by meiotic synthesis dependent strand annealing (SDSA) as well as disassembly of D loop recombination intermediates. The sequence is that of Regulator of telomere elongation helicase 1 homolog from Drosophila ananassae (Fruit fly).